Reading from the N-terminus, the 157-residue chain is Protein Smg homolog (157 aa).

Belongs to the Smg family.

The protein is Protein Smg homolog of Shewanella piezotolerans (strain WP3 / JCM 13877).